The chain runs to 114 residues: Hydrogenase maturation factor HypA (114 aa).

His-2 contributes to the Ni(2+) binding site. Residues Cys-70, Cys-73, Cys-86, and Cys-89 each contribute to the Zn(2+) site.

It belongs to the HypA/HybF family.

Involved in the maturation of [NiFe] hydrogenases. Required for nickel insertion into the metal center of the hydrogenase. The sequence is that of Hydrogenase maturation factor HypA from Trichodesmium erythraeum (strain IMS101).